Consider the following 2609-residue polypeptide: Mycosubtilin synthase subunit C (2609 aa).

The segment at 258–1628 (PREKTIHQLF…RVCAQPEMTV (1371 aa)) is domain 1 (D-serine-activating). The interval 288–695 (TYQELNEKAN…HIPSIQESIV (408 aa)) is adenylation 1. A Carrier 1 domain is found at 771-845 (APRTELEKIL…ELVPYVEPVT (75 aa)). At serine 806 the chain carries O-(pantetheine 4'-phosphoryl)serine. Residues 853-1312 (IKGPALLTPI…EISIDELDQF (460 aa)) form an epimerization 1 region. The condensation 1 stretch occupies residues 1322–1623 (IENIYPLTPM…NTIPVRVCAQ (302 aa)). A domain 2 (isoleucine-activating) region spans residues 1778–2359 (PKEKTIYQLF…AHAIQAAALP (582 aa)). Positions 1808-2205 (TYRQLNEQAN…LVESVKEAVV (398 aa)) are adenylation 2. Positions 2282–2357 (APRTLIEKQL…TMAHAIQAAA (76 aa)) constitute a Carrier 2 domain. Serine 2317 carries the O-(pantetheine 4'-phosphoryl)serine modification. The interval 2375-2581 (IPVFCFPPLI…ENMSTIRSIM (207 aa)) is thioesterase.

It belongs to the ATP-dependent AMP-binding enzyme family. Pantetheine 4'-phosphate is required as a cofactor.

Functionally, this protein is a multifunctional enzyme, able to activate and polymerize the amino acids Ser and Asn as part of the synthesis of mycosubtilin. The Ser residue is further epimerized to the D-isomer form. The activation sites for these amino acids consist of individual domains. The chain is Mycosubtilin synthase subunit C (mycC) from Bacillus subtilis.